The primary structure comprises 294 residues: Elongation factor Ts (294 aa).

The tract at residues 79-82 is involved in Mg(2+) ion dislocation from EF-Tu; it reads TDFV.

It belongs to the EF-Ts family.

It localises to the cytoplasm. In terms of biological role, associates with the EF-Tu.GDP complex and induces the exchange of GDP to GTP. It remains bound to the aminoacyl-tRNA.EF-Tu.GTP complex up to the GTP hydrolysis stage on the ribosome. This Geobacillus kaustophilus (strain HTA426) protein is Elongation factor Ts (tsf).